The sequence spans 187 residues: Rusticyanin (187 aa).

Residues 1–32 (MYTQNTMKKNWYVTVGAAAALAATVGMGTAMA) form the signal peptide. Residues 85–187 (SFEVHDKKNP…TGMFGKIIVK (103 aa)) form the Plastocyanin-like domain. Cu cation-binding residues include H117, C170, H175, and M180.

In terms of assembly, monomer. Cu cation is required as a cofactor.

It is found in the periplasm. Its function is as follows. Electron carrier from cytochrome c552 to the A-type oxidase. The polypeptide is Rusticyanin (rus) (Acidithiobacillus ferridurans).